Consider the following 549-residue polypeptide: Oxygen-dependent choline dehydrogenase (549 aa).

4–33 (DFVIIGSGSAGSAMAYRLSEDGRYSVIVIE) contacts FAD. Catalysis depends on His465, which acts as the Proton acceptor.

Belongs to the GMC oxidoreductase family. Requires FAD as cofactor.

It carries out the reaction choline + A = betaine aldehyde + AH2. The enzyme catalyses betaine aldehyde + NAD(+) + H2O = glycine betaine + NADH + 2 H(+). It participates in amine and polyamine biosynthesis; betaine biosynthesis via choline pathway; betaine aldehyde from choline (cytochrome c reductase route): step 1/1. In terms of biological role, involved in the biosynthesis of the osmoprotectant glycine betaine. Catalyzes the oxidation of choline to betaine aldehyde and betaine aldehyde to glycine betaine at the same rate. In Brucella ovis (strain ATCC 25840 / 63/290 / NCTC 10512), this protein is Oxygen-dependent choline dehydrogenase.